A 432-amino-acid polypeptide reads, in one-letter code: Adenylosuccinate synthetase (432 aa).

GTP-binding positions include 12 to 18 and 40 to 42; these read GDEGKGK and GHT. The active-site Proton acceptor is the Asp13. The Mg(2+) site is built by Asp13 and Gly40. Residues 13–16, 38–41, Thr132, Arg146, Gln226, Thr241, and Arg305 each bind IMP; these read DEGK and NAGH. The active-site Proton donor is the His41. Substrate is bound at residue 301–307; that stretch reads TVTGRKR. Residues Arg307, 333-335, and 415-417 contribute to the GTP site; these read KLD and STS.

Belongs to the adenylosuccinate synthetase family. As to quaternary structure, homodimer. Mg(2+) is required as a cofactor.

It localises to the cytoplasm. It carries out the reaction IMP + L-aspartate + GTP = N(6)-(1,2-dicarboxyethyl)-AMP + GDP + phosphate + 2 H(+). The protein operates within purine metabolism; AMP biosynthesis via de novo pathway; AMP from IMP: step 1/2. In terms of biological role, plays an important role in the de novo pathway of purine nucleotide biosynthesis. Catalyzes the first committed step in the biosynthesis of AMP from IMP. The polypeptide is Adenylosuccinate synthetase (Chelativorans sp. (strain BNC1)).